Here is a 424-residue protein sequence, read N- to C-terminus: UDP-N-acetylglucosamine 1-carboxyvinyltransferase (424 aa).

22–23 serves as a coordination point for phosphoenolpyruvate; it reads KN. Arginine 93 is a binding site for UDP-N-acetyl-alpha-D-glucosamine. Residue cysteine 117 is the Proton donor of the active site. Cysteine 117 carries the post-translational modification 2-(S-cysteinyl)pyruvic acid O-phosphothioketal. UDP-N-acetyl-alpha-D-glucosamine is bound by residues 122-126, aspartate 307, and valine 329; that span reads RPIDL.

This sequence belongs to the EPSP synthase family. MurA subfamily.

It localises to the cytoplasm. It catalyses the reaction phosphoenolpyruvate + UDP-N-acetyl-alpha-D-glucosamine = UDP-N-acetyl-3-O-(1-carboxyvinyl)-alpha-D-glucosamine + phosphate. The protein operates within cell wall biogenesis; peptidoglycan biosynthesis. Functionally, cell wall formation. Adds enolpyruvyl to UDP-N-acetylglucosamine. The chain is UDP-N-acetylglucosamine 1-carboxyvinyltransferase from Chlorobium limicola (strain DSM 245 / NBRC 103803 / 6330).